Here is a 174-residue protein sequence, read N- to C-terminus: N5-carboxyaminoimidazole ribonucleotide mutase (174 aa).

Substrate contacts are provided by Ser15, Asp18, and Arg45.

This sequence belongs to the AIR carboxylase family. Class I subfamily.

The catalysed reaction is 5-carboxyamino-1-(5-phospho-D-ribosyl)imidazole + H(+) = 5-amino-1-(5-phospho-D-ribosyl)imidazole-4-carboxylate. It functions in the pathway purine metabolism; IMP biosynthesis via de novo pathway; 5-amino-1-(5-phospho-D-ribosyl)imidazole-4-carboxylate from 5-amino-1-(5-phospho-D-ribosyl)imidazole (N5-CAIR route): step 2/2. Catalyzes the conversion of N5-carboxyaminoimidazole ribonucleotide (N5-CAIR) to 4-carboxy-5-aminoimidazole ribonucleotide (CAIR). This Pyrococcus abyssi (strain GE5 / Orsay) protein is N5-carboxyaminoimidazole ribonucleotide mutase.